The sequence spans 211 residues: Uridine kinase (211 aa).

Position 15 to 22 (15 to 22) interacts with ATP; sequence GGSGSGKT.

This sequence belongs to the uridine kinase family.

It is found in the cytoplasm. It carries out the reaction uridine + ATP = UMP + ADP + H(+). The enzyme catalyses cytidine + ATP = CMP + ADP + H(+). The protein operates within pyrimidine metabolism; CTP biosynthesis via salvage pathway; CTP from cytidine: step 1/3. It participates in pyrimidine metabolism; UMP biosynthesis via salvage pathway; UMP from uridine: step 1/1. This is Uridine kinase from Latilactobacillus sakei subsp. sakei (strain 23K) (Lactobacillus sakei subsp. sakei).